The primary structure comprises 218 residues: MPTLLLTGFEPFHTHPDNPSAQAAQELHGLELPGGWGVHSALLPVEPHAAGAALTRLLSEQDPGAVLLTGLAAGRPQVTLERVGVGVMDFQIPDNAGQTYRDQPIEPDAPAAYLATLPLRAILAAWREAEIPGDISNSAGLYVCNFVLYHALHWLREHGRGAVPCGFLHVPANAAVALAVPADRPPLPYLPQSEITRAVRVAAEAITAQSSVLQMGKM.

Catalysis depends on residues Glu81, Cys144, and His169.

This sequence belongs to the peptidase C15 family. In terms of assembly, homotetramer.

Its subcellular location is the cytoplasm. The enzyme catalyses Release of an N-terminal pyroglutamyl group from a polypeptide, the second amino acid generally not being Pro.. Functionally, removes 5-oxoproline from various penultimate amino acid residues except L-proline. This Deinococcus radiodurans (strain ATCC 13939 / DSM 20539 / JCM 16871 / CCUG 27074 / LMG 4051 / NBRC 15346 / NCIMB 9279 / VKM B-1422 / R1) protein is Pyrrolidone-carboxylate peptidase (pcp).